A 949-amino-acid polypeptide reads, in one-letter code: AP-1 complex subunit beta-1 (949 aa).

Residue Lys318 is modified to N6-acetyllysine. The residue at position 574 (Tyr574) is a 3'-nitrotyrosine. A disordered region spans residues 592–623 (SLPPRTASSESTESPEAAPAGAPASDQPDVIP). The span at 594–616 (PPRTASSESTESPEAAPAGAPAS) shows a compositional bias: low complexity.

It belongs to the adaptor complexes large subunit family. In terms of assembly, adaptor protein complex 1 (AP-1) is a heterotetramer composed of two large adaptins (gamma-type subunit AP1G1 and beta-type subunit AP1B1), a medium adaptin (mu-type subunit AP1M1 or AP1M2) and a small adaptin (sigma-type subunit AP1S1 or AP1S2 or AP1S3). The N-terminus is blocked.

The protein resides in the golgi apparatus. It is found in the cytoplasmic vesicle. It localises to the clathrin-coated vesicle membrane. Subunit of clathrin-associated adaptor protein complex 1 that plays a role in protein sorting in the late-Golgi/trans-Golgi network (TGN) and/or endosomes. The AP complexes mediate both the recruitment of clathrin to membranes and the recognition of sorting signals within the cytosolic tails of transmembrane cargo molecules. The chain is AP-1 complex subunit beta-1 (Ap1b1) from Rattus norvegicus (Rat).